The chain runs to 261 residues: uncharacterized protein (261 aa).

The first 22 residues, 1 to 22 (MGYLKKVGMCISLLIVIIFVTS), serve as a signal peptide directing secretion. Cys-23 is lipidated: N-palmitoyl cysteine. Cys-23 carries the S-diacylglycerol cysteine lipid modification.

It belongs to the staphylococcal tandem lipoprotein family.

Its subcellular location is the cell membrane. This is an uncharacterized protein from Staphylococcus aureus (strain bovine RF122 / ET3-1).